A 230-amino-acid polypeptide reads, in one-letter code: Flagellar L-ring protein (230 aa).

The first 15 residues, 1–15 (MSRLPSLSRLCLAIA), serve as a signal peptide directing secretion. Cys-16 carries the N-palmitoyl cysteine lipid modification. Cys-16 carries S-diacylglycerol cysteine lipidation.

This sequence belongs to the FlgH family. In terms of assembly, the basal body constitutes a major portion of the flagellar organelle and consists of four rings (L,P,S, and M) mounted on a central rod.

The protein resides in the cell outer membrane. It is found in the bacterial flagellum basal body. Its function is as follows. Assembles around the rod to form the L-ring and probably protects the motor/basal body from shearing forces during rotation. The protein is Flagellar L-ring protein of Xanthomonas euvesicatoria pv. vesicatoria (strain 85-10) (Xanthomonas campestris pv. vesicatoria).